We begin with the raw amino-acid sequence, 637 residues long: 3D-(3,5/4)-trihydroxycyclohexane-1,2-dione hydrolase (637 aa).

Glutamate 66 serves as a coordination point for thiamine diphosphate. A thiamine pyrophosphate binding region spans residues 442 to 522 (SLPGDLQRLW…INVLLFDNSG (81 aa)). Residues aspartate 493 and asparagine 520 each contribute to the Mg(2+) site.

This sequence belongs to the TPP enzyme family. Requires Mg(2+) as cofactor. Thiamine diphosphate serves as cofactor.

It carries out the reaction 3D-3,5/4-trihydroxycyclohexane-1,2-dione + H2O = 5-deoxy-D-glucuronate + H(+). Its pathway is polyol metabolism; myo-inositol degradation into acetyl-CoA; acetyl-CoA from myo-inositol: step 3/7. Involved in the cleavage of the C1-C2 bond of 3D-(3,5/4)-trihydroxycyclohexane-1,2-dione (THcHDO) to yield 5-deoxy-glucuronate (5DG). The chain is 3D-(3,5/4)-trihydroxycyclohexane-1,2-dione hydrolase (iolD) from Bacillus subtilis (strain 168).